The chain runs to 365 residues: Peptide chain release factor 2 (365 aa).

Glutamine 252 is subject to N5-methylglutamine.

This sequence belongs to the prokaryotic/mitochondrial release factor family. Post-translationally, methylated by PrmC. Methylation increases the termination efficiency of RF2.

Its subcellular location is the cytoplasm. In terms of biological role, peptide chain release factor 2 directs the termination of translation in response to the peptide chain termination codons UGA and UAA. The protein is Peptide chain release factor 2 of Aeromonas salmonicida (strain A449).